The chain runs to 356 residues: UDP-3-O-acylglucosamine N-acyltransferase (356 aa).

The Proton acceptor role is filled by His-251.

It belongs to the transferase hexapeptide repeat family. LpxD subfamily. As to quaternary structure, homotrimer.

It carries out the reaction a UDP-3-O-[(3R)-3-hydroxyacyl]-alpha-D-glucosamine + a (3R)-hydroxyacyl-[ACP] = a UDP-2-N,3-O-bis[(3R)-3-hydroxyacyl]-alpha-D-glucosamine + holo-[ACP] + H(+). It functions in the pathway bacterial outer membrane biogenesis; LPS lipid A biosynthesis. In terms of biological role, catalyzes the N-acylation of UDP-3-O-acylglucosamine using 3-hydroxyacyl-ACP as the acyl donor. Is involved in the biosynthesis of lipid A, a phosphorylated glycolipid that anchors the lipopolysaccharide to the outer membrane of the cell. The chain is UDP-3-O-acylglucosamine N-acyltransferase from Ralstonia nicotianae (strain ATCC BAA-1114 / GMI1000) (Ralstonia solanacearum).